The following is a 100-amino-acid chain: Urease subunit gamma (100 aa).

It belongs to the urease gamma subunit family. As to quaternary structure, heterotrimer of UreA (gamma), UreB (beta) and UreC (alpha) subunits. Three heterotrimers associate to form the active enzyme.

It is found in the cytoplasm. It carries out the reaction urea + 2 H2O + H(+) = hydrogencarbonate + 2 NH4(+). It functions in the pathway nitrogen metabolism; urea degradation; CO(2) and NH(3) from urea (urease route): step 1/1. This chain is Urease subunit gamma, found in Pseudomonas syringae pv. syringae (strain B728a).